The primary structure comprises 129 residues: UPF0344 protein SAR0931 (129 aa).

A run of 4 helical transmembrane segments spans residues 1 to 21, 36 to 56, 67 to 87, and 99 to 119; these read MLHL…ATYL, LHMV…WILI, MLLT…EVSI, and MFWI…ILPL.

Belongs to the UPF0344 family.

It is found in the cell membrane. The polypeptide is UPF0344 protein SAR0931 (Staphylococcus aureus (strain MRSA252)).